The following is a 619-amino-acid chain: Dihydroxy-acid dehydratase (619 aa).

D81 provides a ligand contact to Mg(2+). Residue C122 participates in [2Fe-2S] cluster binding. 2 residues coordinate Mg(2+): D123 and K124. K124 bears the N6-carboxylysine mark. Residue C201 participates in [2Fe-2S] cluster binding. E496 is a Mg(2+) binding site. Residue S522 is the Proton acceptor of the active site.

This sequence belongs to the IlvD/Edd family. As to quaternary structure, homodimer. [2Fe-2S] cluster is required as a cofactor. Requires Mg(2+) as cofactor.

It carries out the reaction (2R)-2,3-dihydroxy-3-methylbutanoate = 3-methyl-2-oxobutanoate + H2O. The enzyme catalyses (2R,3R)-2,3-dihydroxy-3-methylpentanoate = (S)-3-methyl-2-oxopentanoate + H2O. The protein operates within amino-acid biosynthesis; L-isoleucine biosynthesis; L-isoleucine from 2-oxobutanoate: step 3/4. It functions in the pathway amino-acid biosynthesis; L-valine biosynthesis; L-valine from pyruvate: step 3/4. Functionally, functions in the biosynthesis of branched-chain amino acids. Catalyzes the dehydration of (2R,3R)-2,3-dihydroxy-3-methylpentanoate (2,3-dihydroxy-3-methylvalerate) into 2-oxo-3-methylpentanoate (2-oxo-3-methylvalerate) and of (2R)-2,3-dihydroxy-3-methylbutanoate (2,3-dihydroxyisovalerate) into 2-oxo-3-methylbutanoate (2-oxoisovalerate), the penultimate precursor to L-isoleucine and L-valine, respectively. The protein is Dihydroxy-acid dehydratase of Paracidovorax citrulli (strain AAC00-1) (Acidovorax citrulli).